We begin with the raw amino-acid sequence, 383 residues long: U-box domain-containing protein 63 (383 aa).

The tract at residues 166–186 (PDGNVSNSHRNTQQKRDFASV) is disordered. The U-box domain maps to 201–273 (SLKAILSDPV…HAFRQEEDSD (73 aa)).

The catalysed reaction is S-ubiquitinyl-[E2 ubiquitin-conjugating enzyme]-L-cysteine + [acceptor protein]-L-lysine = [E2 ubiquitin-conjugating enzyme]-L-cysteine + N(6)-ubiquitinyl-[acceptor protein]-L-lysine.. It participates in protein modification; protein ubiquitination. In terms of biological role, functions as an E3 ubiquitin ligase. This is U-box domain-containing protein 63 (PUB63) from Arabidopsis thaliana (Mouse-ear cress).